We begin with the raw amino-acid sequence, 434 residues long: Histidinol dehydrogenase (434 aa).

The NAD(+) site is built by Tyr130, Gln191, and Asn214. Substrate is bound by residues Ser237, Gln259, and His262. The Zn(2+) site is built by Gln259 and His262. Catalysis depends on proton acceptor residues Glu328 and His329. 4 residues coordinate substrate: His329, Asp362, Glu416, and His421. Position 362 (Asp362) interacts with Zn(2+). Residue His421 participates in Zn(2+) binding.

It belongs to the histidinol dehydrogenase family. The cofactor is Zn(2+).

It carries out the reaction L-histidinol + 2 NAD(+) + H2O = L-histidine + 2 NADH + 3 H(+). The protein operates within amino-acid biosynthesis; L-histidine biosynthesis; L-histidine from 5-phospho-alpha-D-ribose 1-diphosphate: step 9/9. In terms of biological role, catalyzes the sequential NAD-dependent oxidations of L-histidinol to L-histidinaldehyde and then to L-histidine. The polypeptide is Histidinol dehydrogenase (Rhodospirillum rubrum (strain ATCC 11170 / ATH 1.1.1 / DSM 467 / LMG 4362 / NCIMB 8255 / S1)).